We begin with the raw amino-acid sequence, 750 residues long: Methylmalonyl-CoA mutase, mitochondrial (750 aa).

The transit peptide at 1–32 (MLRAKNQLFLLSPHYLRQVKESSGSRLIQQRL) directs the protein to the mitochondrion. Gln-50 is a malonyl-CoA binding site. The residue at position 89 (Lys-89) is an N6-acetyllysine. Malonyl-CoA is bound by residues 96-99 (YPTM) and 106-110 (TIRQY). The residue at position 212 (Lys-212) is an N6-acetyllysine. Malonyl-CoA contacts are provided by residues 216–218 (TIQ), Arg-228, Lys-255, His-265, and 304–306 (RLS). At Lys-335 the chain carries N6-acetyllysine. Lys-343 carries the post-translational modification N6-succinyllysine. A Phosphoserine modification is found at Ser-481. Lys-595 is modified (N6-succinyllysine). Position 602 is an N6-acetyllysine (Lys-602). Residues 614–746 (RPRLLVAKMG…DDIEKCLEKK (133 aa)) enclose the B12-binding domain. His-627 serves as a coordination point for adenosylcob(III)alamin.

It belongs to the methylmalonyl-CoA mutase family. In terms of assembly, homodimer. Interacts (the apoenzyme form) with MMAA; the interaction is GTP dependent. It depends on adenosylcob(III)alamin as a cofactor.

It localises to the mitochondrion matrix. The protein resides in the mitochondrion. Its subcellular location is the cytoplasm. The catalysed reaction is (R)-methylmalonyl-CoA = succinyl-CoA. With respect to regulation, inhibited by itaconyl-CoA, a metabolite that inactivates the coenzyme B12 cofactor. Functionally, catalyzes the reversible isomerization of methylmalonyl-CoA (MMCoA) (generated from branched-chain amino acid metabolism and degradation of dietary odd chain fatty acids and cholesterol) to succinyl-CoA (3-carboxypropionyl-CoA), a key intermediate of the tricarboxylic acid cycle. The polypeptide is Methylmalonyl-CoA mutase, mitochondrial (MMUT) (Bos taurus (Bovine)).